Reading from the N-terminus, the 843-residue chain is DNA-directed RNA polymerase subunit beta' (843 aa).

4 residues coordinate Zn(2+): Cys-70, Cys-72, Cys-85, and Cys-88. Mg(2+) is bound by residues Asp-686, Asp-688, and Asp-690.

The protein belongs to the RNA polymerase beta' chain family. RpoC1 subfamily. In terms of assembly, in plastids the minimal PEP RNA polymerase catalytic core is composed of four subunits: alpha, beta, beta', and beta''. When a (nuclear-encoded) sigma factor is associated with the core the holoenzyme is formed, which can initiate transcription. It depends on Mg(2+) as a cofactor. The cofactor is Zn(2+).

It is found in the plastid. The protein resides in the chloroplast. It catalyses the reaction RNA(n) + a ribonucleoside 5'-triphosphate = RNA(n+1) + diphosphate. DNA-dependent RNA polymerase catalyzes the transcription of DNA into RNA using the four ribonucleoside triphosphates as substrates. This is DNA-directed RNA polymerase subunit beta' from Trieres chinensis (Marine centric diatom).